A 464-amino-acid polypeptide reads, in one-letter code: ATP synthase subunit beta 1 (464 aa).

153–160 (GGAGVGKT) is a binding site for ATP.

This sequence belongs to the ATPase alpha/beta chains family. F-type ATPases have 2 components, CF(1) - the catalytic core - and CF(0) - the membrane proton channel. CF(1) has five subunits: alpha(3), beta(3), gamma(1), delta(1), epsilon(1). CF(0) has three main subunits: a(1), b(2) and c(9-12). The alpha and beta chains form an alternating ring which encloses part of the gamma chain. CF(1) is attached to CF(0) by a central stalk formed by the gamma and epsilon chains, while a peripheral stalk is formed by the delta and b chains.

It localises to the cell inner membrane. It catalyses the reaction ATP + H2O + 4 H(+)(in) = ADP + phosphate + 5 H(+)(out). Its function is as follows. Produces ATP from ADP in the presence of a proton gradient across the membrane. The catalytic sites are hosted primarily by the beta subunits. The chain is ATP synthase subunit beta 1 from Burkholderia mallei (strain SAVP1).